The sequence spans 311 residues: Chemotaxis protein CheV3 (311 aa).

Positions 13–164 (EIELVDFRIY…LESILDDLKL (152 aa)) constitute a CheW-like domain. The Response regulatory domain occupies 182–308 (EVLFLDDSKT…FTEEISKILD (127 aa)). Position 241 is a 4-aspartylphosphate (Asp241).

In terms of biological role, plays a role in chemotaxis signal transduction system in order to colonize the host stomach. May act as a phosphate sink to control the flow of phosphate to CheAY. In Helicobacter pylori (strain ATCC 700392 / 26695) (Campylobacter pylori), this protein is Chemotaxis protein CheV3.